The sequence spans 80 residues: Omega-conotoxin-like PuIA (80 aa).

The first 22 residues, 1 to 22, serve as a signal peptide directing secretion; sequence MKLTCVMIVAVLFLTAWTFVTA. Positions 23–50 are excised as a propeptide; it reads DSIRALEDLFAKAPDEMENSGASPLNER. Cystine bridges form between C52-C70, C59-C74, and C69-C78.

Belongs to the conotoxin O1 superfamily. Expressed by the venom duct.

It localises to the secreted. Omega-conotoxins act at presynaptic membranes, they bind and block voltage-gated calcium channels (Cav). The polypeptide is Omega-conotoxin-like PuIA (Conus pulicarius (Flea-bitten cone)).